Reading from the N-terminus, the 591-residue chain is Aspartate--tRNA ligase (591 aa).

Glutamate 173 lines the L-aspartate pocket. Positions 197–200 (QLFK) are aspartate. Arginine 219 lines the L-aspartate pocket. ATP-binding positions include 219–221 (RDE) and glutamine 228. Histidine 448 serves as a coordination point for L-aspartate. Residue glutamate 482 coordinates ATP. Arginine 489 lines the L-aspartate pocket. 534–537 (GLDR) provides a ligand contact to ATP.

It belongs to the class-II aminoacyl-tRNA synthetase family. Type 1 subfamily. As to quaternary structure, homodimer.

It localises to the cytoplasm. The catalysed reaction is tRNA(Asp) + L-aspartate + ATP = L-aspartyl-tRNA(Asp) + AMP + diphosphate. In terms of biological role, catalyzes the attachment of L-aspartate to tRNA(Asp) in a two-step reaction: L-aspartate is first activated by ATP to form Asp-AMP and then transferred to the acceptor end of tRNA(Asp). This chain is Aspartate--tRNA ligase, found in Shewanella sp. (strain MR-4).